The primary structure comprises 111 residues: Nucleoid-associated protein Cag_1190 (111 aa).

The protein belongs to the YbaB/EbfC family. As to quaternary structure, homodimer.

The protein resides in the cytoplasm. It is found in the nucleoid. Its function is as follows. Binds to DNA and alters its conformation. May be involved in regulation of gene expression, nucleoid organization and DNA protection. The polypeptide is Nucleoid-associated protein Cag_1190 (Chlorobium chlorochromatii (strain CaD3)).